The following is a 357-amino-acid chain: Uroporphyrinogen decarboxylase (357 aa).

Substrate-binding positions include 27 to 31 (RQAGR), aspartate 77, tyrosine 154, serine 209, and histidine 330.

Belongs to the uroporphyrinogen decarboxylase family. Homodimer.

It localises to the cytoplasm. It carries out the reaction uroporphyrinogen III + 4 H(+) = coproporphyrinogen III + 4 CO2. It participates in porphyrin-containing compound metabolism; protoporphyrin-IX biosynthesis; coproporphyrinogen-III from 5-aminolevulinate: step 4/4. Its function is as follows. Catalyzes the decarboxylation of four acetate groups of uroporphyrinogen-III to yield coproporphyrinogen-III. This is Uroporphyrinogen decarboxylase from Acinetobacter baumannii (strain SDF).